The primary structure comprises 428 residues: Serine--tRNA ligase (428 aa).

An L-serine-binding site is contributed by 236-238 (TAE). 267–269 (RSE) contacts ATP. L-serine is bound at residue E290. 354–357 (EISS) provides a ligand contact to ATP. S388 contributes to the L-serine binding site.

The protein belongs to the class-II aminoacyl-tRNA synthetase family. Type-1 seryl-tRNA synthetase subfamily. Homodimer. The tRNA molecule binds across the dimer.

Its subcellular location is the cytoplasm. It carries out the reaction tRNA(Ser) + L-serine + ATP = L-seryl-tRNA(Ser) + AMP + diphosphate + H(+). The enzyme catalyses tRNA(Sec) + L-serine + ATP = L-seryl-tRNA(Sec) + AMP + diphosphate + H(+). The protein operates within aminoacyl-tRNA biosynthesis; selenocysteinyl-tRNA(Sec) biosynthesis; L-seryl-tRNA(Sec) from L-serine and tRNA(Sec): step 1/1. Functionally, catalyzes the attachment of serine to tRNA(Ser). Is also able to aminoacylate tRNA(Sec) with serine, to form the misacylated tRNA L-seryl-tRNA(Sec), which will be further converted into selenocysteinyl-tRNA(Sec). In Psychrobacter sp. (strain PRwf-1), this protein is Serine--tRNA ligase.